The primary structure comprises 393 residues: Pyrimidine monooxygenase RutA (393 aa).

Residues 79–80, N145, E154, 170–171, and S220 each bind FMN; these read IK and RY.

Belongs to the NtaA/SnaA/DszA monooxygenase family. RutA subfamily.

It catalyses the reaction uracil + FMNH2 + NADH + O2 = (Z)-3-ureidoacrylate + FMN + NAD(+) + H2O + H(+). The catalysed reaction is thymine + FMNH2 + NADH + O2 = (Z)-2-methylureidoacrylate + FMN + NAD(+) + H2O + H(+). Catalyzes the pyrimidine ring opening between N-3 and C-4 by an unusual flavin hydroperoxide-catalyzed mechanism, adding oxygen atoms in the process to yield ureidoacrylate peracid, that immediately reacts with FMN forming ureidoacrylate and FMN-N(5)-oxide. The FMN-N(5)-oxide reacts spontaneously with NADH to produce FMN. Requires the flavin reductase RutF to regenerate FMN in vivo. The sequence is that of Pyrimidine monooxygenase RutA from Escherichia coli O18:K1:H7 (strain IHE3034 / ExPEC).